Consider the following 104-residue polypeptide: Integration host factor subunit beta (104 aa).

This sequence belongs to the bacterial histone-like protein family. Heterodimer of an alpha and a beta chain.

Its function is as follows. This protein is one of the two subunits of integration host factor, a specific DNA-binding protein that functions in genetic recombination as well as in transcriptional and translational control. This is Integration host factor subunit beta (ihfB) from Xylella fastidiosa (strain 9a5c).